A 140-amino-acid chain; its full sequence is Lipoprotein MlpD (140 aa).

A signal peptide spans 1-17; the sequence is MKIINILFCLFLLMLNG. Residue cysteine 18 is the site of N-palmitoyl cysteine attachment. Cysteine 18 carries S-diacylglycerol cysteine lipidation. The segment at 22–53 is disordered; it reads DTNNSQTKSRQKRDLTQKEATQEKPKSKEELL. Positions 33-53 are enriched in basic and acidic residues; it reads KRDLTQKEATQEKPKSKEELL.

The protein belongs to the Multicopy lipoprotein (Mlp) family.

It is found in the cell outer membrane. In terms of biological role, an outer membrane protein that may participate in pathogenesis. Some human Lyme disease patients have antibodies against this protein. The Mlp proteins probably undergo intragenic recombination, generating new alleles. This is Lipoprotein MlpD from Borreliella burgdorferi (strain ATCC 35210 / DSM 4680 / CIP 102532 / B31) (Borrelia burgdorferi).